Consider the following 428-residue polypeptide: UPF0597 protein Dde_0807 (428 aa).

This sequence belongs to the UPF0597 family.

The polypeptide is UPF0597 protein Dde_0807 (Oleidesulfovibrio alaskensis (strain ATCC BAA-1058 / DSM 17464 / G20) (Desulfovibrio alaskensis)).